A 294-amino-acid polypeptide reads, in one-letter code: 4-hydroxy-tetrahydrodipicolinate synthase (294 aa).

Threonine 47 contributes to the pyruvate binding site. Residue tyrosine 136 is the Proton donor/acceptor of the active site. Catalysis depends on lysine 164, which acts as the Schiff-base intermediate with substrate. Pyruvate is bound at residue valine 206.

The protein belongs to the DapA family. Homotetramer; dimer of dimers.

The protein localises to the cytoplasm. It carries out the reaction L-aspartate 4-semialdehyde + pyruvate = (2S,4S)-4-hydroxy-2,3,4,5-tetrahydrodipicolinate + H2O + H(+). The protein operates within amino-acid biosynthesis; L-lysine biosynthesis via DAP pathway; (S)-tetrahydrodipicolinate from L-aspartate: step 3/4. Catalyzes the condensation of (S)-aspartate-beta-semialdehyde [(S)-ASA] and pyruvate to 4-hydroxy-tetrahydrodipicolinate (HTPA). This chain is 4-hydroxy-tetrahydrodipicolinate synthase, found in Acaryochloris marina (strain MBIC 11017).